Here is a 576-residue protein sequence, read N- to C-terminus: Sulfite reductase [NADPH] hemoprotein beta-component (576 aa).

4 residues coordinate [4Fe-4S] cluster: Cys439, Cys445, Cys485, and Cys489. Residue Cys489 coordinates siroheme.

Belongs to the nitrite and sulfite reductase 4Fe-4S domain family. As to quaternary structure, alpha(8)-beta(8). The alpha component is a flavoprotein, the beta component is a hemoprotein. It depends on siroheme as a cofactor. Requires [4Fe-4S] cluster as cofactor.

The enzyme catalyses hydrogen sulfide + 3 NADP(+) + 3 H2O = sulfite + 3 NADPH + 4 H(+). The protein operates within sulfur metabolism; hydrogen sulfide biosynthesis; hydrogen sulfide from sulfite (NADPH route): step 1/1. Its function is as follows. Component of the sulfite reductase complex that catalyzes the 6-electron reduction of sulfite to sulfide. This is one of several activities required for the biosynthesis of L-cysteine from sulfate. The protein is Sulfite reductase [NADPH] hemoprotein beta-component of Aliivibrio fischeri (strain ATCC 700601 / ES114) (Vibrio fischeri).